The chain runs to 356 residues: tRNA N6-adenosine threonylcarbamoyltransferase (356 aa).

Fe cation contacts are provided by His-115 and His-119. Residues Leu-137–Gly-141, Asp-170, Gly-183, and Asn-280 each bind substrate. Residue Asp-308 coordinates Fe cation.

Belongs to the KAE1 / TsaD family. It depends on Fe(2+) as a cofactor.

The protein localises to the cytoplasm. It carries out the reaction L-threonylcarbamoyladenylate + adenosine(37) in tRNA = N(6)-L-threonylcarbamoyladenosine(37) in tRNA + AMP + H(+). In terms of biological role, required for the formation of a threonylcarbamoyl group on adenosine at position 37 (t(6)A37) in tRNAs that read codons beginning with adenine. Is involved in the transfer of the threonylcarbamoyl moiety of threonylcarbamoyl-AMP (TC-AMP) to the N6 group of A37, together with TsaE and TsaB. TsaD likely plays a direct catalytic role in this reaction. This Paracoccus denitrificans (strain Pd 1222) protein is tRNA N6-adenosine threonylcarbamoyltransferase.